Here is a 444-residue protein sequence, read N- to C-terminus: MGKGGNQDEGATELEAPMPTFRWEEIQKHNLRTDKWLVIDRKVYNITKWSSRHPGGQRVIGHYAGEDATDAFLAFHRNLDFVRKFMKPLLIGELAPEEPSQDRGKNSQITEDFRALRKTAEDMNLFKSNQLFFLLHLAHIIAMESIAWFTLFYFGNGWIPTIITAFVLATSQAQAGWLQHDYGHLSVYKKSMWNHIVHKFVIGHLKGASANWWNHRHFQHHAKPNIFHKDPDVNMLHVFVLGEWQPIEYGKKKLKYLPYNHQHEYFFLIGPPLLIPLYFQYQIIMTMIVRKYWADLAWAISYYTRFFITYIPFYGVLGSILFLNFIRFLESHWFVWVTQMNHIVMEIDREPYRDWFSSQLAATCNVEQSFFNDWFSGHLNFQIEHHLFPTMPRHNLHKIAPLVRSLCAKHGIEYQEKPLLRALQDIIGSLRKSGQLWLDAYLHK.

Residues 1–122 (MGKGGNQDEG…FRALRKTAED (122 aa)) are Cytoplasmic-facing. The Cytochrome b5 heme-binding domain maps to 18-95 (MPTFRWEEIQ…MKPLLIGELA (78 aa)). A helical transmembrane segment spans residues 123–143 (MNLFKSNQLFFLLHLAHIIAM). At 144–147 (ESIA) the chain is on the lumenal side. Residues 148-168 (WFTLFYFGNGWIPTIITAFVL) form a helical membrane-spanning segment. The Cytoplasmic segment spans residues 169 to 264 (ATSQAQAGWL…KYLPYNHQHE (96 aa)). The Histidine box-1 motif lies at 180–184 (HDYGH). The Histidine box-2 motif lies at 217-221 (HFQHH). The chain crosses the membrane as a helical span at residues 265-285 (YFFLIGPPLLIPLYFQYQIIM). The Lumenal segment spans residues 286-305 (TMIVRKYWADLAWAISYYTR). Residues 306–326 (FFITYIPFYGVLGSILFLNFI) traverse the membrane as a helical segment. The Cytoplasmic segment spans residues 327 to 444 (RFLESHWFVW…QLWLDAYLHK (118 aa)). The Histidine box-3 motif lies at 382-386 (QIEHH).

Belongs to the fatty acid desaturase type 1 family.

It localises to the endoplasmic reticulum membrane. It carries out the reaction (9Z,12Z)-octadecadienoyl-CoA + 2 Fe(II)-[cytochrome b5] + O2 + 2 H(+) = (6Z,9Z,12Z)-octadecatrienoyl-CoA + 2 Fe(III)-[cytochrome b5] + 2 H2O. The catalysed reaction is (9Z,12Z,15Z)-octadecatrienoyl-CoA + 2 Fe(II)-[cytochrome b5] + O2 + 2 H(+) = (6Z,9Z,12Z,15Z)-octadecatetraenoyl-CoA + 2 Fe(III)-[cytochrome b5] + 2 H2O. The enzyme catalyses (9Z,12Z,15Z,18Z,21Z)-tetracosapentaenoyl-CoA + 2 Fe(II)-[cytochrome b5] + O2 + 2 H(+) = (6Z,9Z,12Z,15Z,18Z,21Z)-tetracosahexaenoyl-CoA + 2 Fe(III)-[cytochrome b5] + 2 H2O. It catalyses the reaction (11E)-octadecenoyl-CoA + 2 Fe(II)-[cytochrome b5] + O2 + 2 H(+) = (6Z,11E)-octadecadienoyl-CoA + 2 Fe(III)-[cytochrome b5] + 2 H2O. It carries out the reaction (11Z,14Z)-eicosadienoyl-CoA + 2 Fe(II)-[cytochrome b5] + O2 + 2 H(+) = (8Z,11Z,14Z)-eicosatrienoyl-CoA + 2 Fe(III)-[cytochrome b5] + 2 H2O. The catalysed reaction is (11Z,14Z,17Z)-eicosatrienoyl-CoA + 2 Fe(II)-[cytochrome b5] + O2 + 2 H(+) = (8Z,11Z,14Z,17Z)-eicosatetraenoyl-CoA + 2 Fe(III)-[cytochrome b5] + 2 H2O. The protein operates within lipid metabolism; polyunsaturated fatty acid biosynthesis. Its function is as follows. Involved in the biosynthesis of highly unsaturated fatty acids (HUFA) from the essential polyunsaturated fatty acids (PUFA) linoleic acid (LA) (18:2n-6) and alpha-linolenic acid (ALA) (18:3n-3) precursors, acting as a fatty acyl-coenzyme A (CoA) desaturase that introduces a cis double bond at carbon 6 of the fatty acyl chain. Catalyzes the first and rate limiting step in this pathway which is the desaturation of LA (18:2n-6) and ALA (18:3n-3) into gamma-linoleate (GLA) (18:3n-6) and stearidonate (18:4n-3), respectively. Subsequently, in the biosynthetic pathway of HUFA n-3 series, it desaturates tetracosapentaenoate (24:5n-3) to tetracosahexaenoate (24:6n-3), which is then converted to docosahexaenoate (DHA)(22:6n-3), an important lipid for nervous system function. It can also desaturate (11E)-octadecenoate (trans-vaccenoate, a metabolite in the biohydrogenation pathway of LA and the predominant trans fatty acid in cow milk) at carbon 6 generating (6Z,11E)-octadecadienoate. In addition to Delta-6 activity, this enzyme exhibits Delta-8 activity with slight biases toward n-3 fatty acyl-CoA substrates. In Bos taurus (Bovine), this protein is Acyl-CoA 6-desaturase (FADS2).